The chain runs to 142 residues: MKTFTAKPETVKRDWFVVDAAGQTLGRLATEIASRLRGKHKPEYTPHVDTGDYIVVINAEQVRVTGAKTSDKMYYSHSGFPGGIKSINFEKLIAKAPERVIETAVKGMLPKNPLGRDMYRKLKVYKGANHPHTAQQPQELKI.

Belongs to the universal ribosomal protein uL13 family. Part of the 50S ribosomal subunit.

In terms of biological role, this protein is one of the early assembly proteins of the 50S ribosomal subunit, although it is not seen to bind rRNA by itself. It is important during the early stages of 50S assembly. The polypeptide is Large ribosomal subunit protein uL13 (Stutzerimonas stutzeri (strain A1501) (Pseudomonas stutzeri)).